We begin with the raw amino-acid sequence, 658 residues long: A-type ATP synthase subunit I (658 aa).

7 helical membrane-spanning segments follow: residues 383-403 (MAFV…YGII), 427-447 (IIMM…NGFI), 475-495 (ILIM…ILGA), 507-526 (ALGS…LYLV), 530-552 (IFGA…LFGL), 568-588 (LLAL…LTGL), and 591-611 (EMIP…GHIA).

Belongs to the V-ATPase 116 kDa subunit family. Has multiple subunits with at least A(3), B(3), C, D, E, F, H, I and proteolipid K(x).

It is found in the cell membrane. In terms of biological role, component of the A-type ATP synthase that produces ATP from ADP in the presence of a proton gradient across the membrane. This chain is A-type ATP synthase subunit I, found in Methanothermobacter thermautotrophicus (strain ATCC 29096 / DSM 1053 / JCM 10044 / NBRC 100330 / Delta H) (Methanobacterium thermoautotrophicum).